Here is a 147-residue protein sequence, read N- to C-terminus: MGHFTEEDKATITSLWGKVNVEDAGGETLGRLLVVYPWTQRFFDSFGNLSSASAIMGNPKVKAHGKKVLTSLGDAIKHLDDLKGTFAQLSELHCDKLHVDPENFKLLGNVLVTVLAIHFGKEFTPEVQASWQKMVTAVASALSSRYH.

Gly2 carries the post-translational modification N-acetylglycine. The 145-residue stretch at 3 to 147 (HFTEEDKATI…VASALSSRYH (145 aa)) folds into the Globin domain. Residue Thr13 is modified to Phosphothreonine. 3 positions are modified to phosphoserine: Ser45, Ser51, and Ser53. Lys60 carries the post-translational modification N6-acetyllysine. Residue His64 coordinates heme b. Residue Lys83 is modified to N6-acetyllysine. His93 serves as a coordination point for heme b. Cys94 carries the S-nitrosocysteine modification. Ser140 carries the post-translational modification Phosphoserine.

This sequence belongs to the globin family. As to quaternary structure, heterotetramer of two alpha chains and two gamma chains in fetal hemoglobin (Hb F). The ratio of gamma-G to gamma-A chains in is approximately 2:1 in infant chimpanzee, and 1:2 in the adult. Red blood cells.

In terms of biological role, gamma chains make up the fetal hemoglobin F, in combination with alpha chains. The polypeptide is Hemoglobin subunit gamma-1 (HBG1) (Pan troglodytes (Chimpanzee)).